A 261-amino-acid polypeptide reads, in one-letter code: Putative cysteine protease YopT-like y4zC (261 aa).

Polar residues predominate over residues 1 to 15 (MHSPISGSFTSSTQV). Disordered stretches follow at residues 1–48 (MHSP…CPDK) and 54–73 (SKPQ…ARPS). Residues 61–73 (PNNPSTSSPARPS) are compositionally biased toward low complexity. Residues C93, H205, and D220 contribute to the active site.

This sequence belongs to the peptidase C58 family.

Functionally, potential cysteine protease, which may play a central role after invasion of host cell. This chain is Putative cysteine protease YopT-like y4zC, found in Sinorhizobium fredii (strain NBRC 101917 / NGR234).